A 79-amino-acid polypeptide reads, in one-letter code: Sec-independent protein translocase protein TatA (79 aa).

The chain crosses the membrane as a helical span at residues 1–21; that stretch reads MGGFTSIWHWVIVLLVIVLLF. Residues 54–79 form a disordered region; sequence ELKTLDAQATQTKVHETSEIKSKQES. Residues 66–79 show a composition bias toward basic and acidic residues; that stretch reads KVHETSEIKSKQES.

It belongs to the TatA/E family. In terms of assembly, the Tat system comprises two distinct complexes: a TatABC complex, containing multiple copies of TatA, TatB and TatC subunits, and a separate TatA complex, containing only TatA subunits. Substrates initially bind to the TatABC complex, which probably triggers association of the separate TatA complex to form the active translocon.

The protein localises to the cell inner membrane. In terms of biological role, part of the twin-arginine translocation (Tat) system that transports large folded proteins containing a characteristic twin-arginine motif in their signal peptide across membranes. TatA could form the protein-conducting channel of the Tat system. This is Sec-independent protein translocase protein TatA from Helicobacter pylori (strain J99 / ATCC 700824) (Campylobacter pylori J99).